A 495-amino-acid polypeptide reads, in one-letter code: Probable staphylococcal-like nuclease CAN4 (495 aa).

Glycine 2 is lipidated: N-myristoyl glycine. The S-palmitoyl cysteine moiety is linked to residue cysteine 11. Disordered stretches follow at residues aspartate 45–leucine 68 and leucine 81–proline 101. Over residues leucine 50–proline 66 the composition is skewed to pro residues. Positions lysine 297–tyrosine 470 constitute a TNase-like domain. Aspartate 310 provides a ligand contact to Ca(2+). Arginine 377 is a catalytic residue. Residue aspartate 382 coordinates Ca(2+). Residues glutamate 385 and arginine 419 contribute to the active site.

Belongs to the thermonuclease family. The cofactor is Ca(2+).

Its subcellular location is the cell membrane. Enzyme that catalyzes the hydrolysis of both DNA and RNA at the 5' position of the phosphodiester bond. This is Probable staphylococcal-like nuclease CAN4 from Oryza sativa subsp. japonica (Rice).